Consider the following 103-residue polypeptide: Large ribosomal subunit protein bL21 (103 aa).

This sequence belongs to the bacterial ribosomal protein bL21 family. In terms of assembly, part of the 50S ribosomal subunit. Contacts protein L20.

In terms of biological role, this protein binds to 23S rRNA in the presence of protein L20. In Nautilia profundicola (strain ATCC BAA-1463 / DSM 18972 / AmH), this protein is Large ribosomal subunit protein bL21.